The following is a 311-amino-acid chain: tRNA(Ile)-lysidine synthase (311 aa).

An ATP-binding site is contributed by 32–37 (SGGPDS).

The protein belongs to the tRNA(Ile)-lysidine synthase family.

The protein resides in the cytoplasm. The enzyme catalyses cytidine(34) in tRNA(Ile2) + L-lysine + ATP = lysidine(34) in tRNA(Ile2) + AMP + diphosphate + H(+). Ligates lysine onto the cytidine present at position 34 of the AUA codon-specific tRNA(Ile) that contains the anticodon CAU, in an ATP-dependent manner. Cytidine is converted to lysidine, thus changing the amino acid specificity of the tRNA from methionine to isoleucine. The chain is tRNA(Ile)-lysidine synthase from Cutibacterium acnes (strain DSM 16379 / KPA171202) (Propionibacterium acnes).